Here is a 348-residue protein sequence, read N- to C-terminus: Aspartate carbamoyltransferase catalytic subunit (348 aa).

2 residues coordinate carbamoyl phosphate: R57 and T58. K86 is an L-aspartate binding site. Residues R107, H135, and Q138 each coordinate carbamoyl phosphate. Positions 172 and 234 each coordinate L-aspartate. Residues L274 and P275 each coordinate carbamoyl phosphate.

This sequence belongs to the aspartate/ornithine carbamoyltransferase superfamily. ATCase family. In terms of assembly, heterododecamer (2C3:3R2) of six catalytic PyrB chains organized as two trimers (C3), and six regulatory PyrI chains organized as three dimers (R2).

The enzyme catalyses carbamoyl phosphate + L-aspartate = N-carbamoyl-L-aspartate + phosphate + H(+). It functions in the pathway pyrimidine metabolism; UMP biosynthesis via de novo pathway; (S)-dihydroorotate from bicarbonate: step 2/3. Its function is as follows. Catalyzes the condensation of carbamoyl phosphate and aspartate to form carbamoyl aspartate and inorganic phosphate, the committed step in the de novo pyrimidine nucleotide biosynthesis pathway. This is Aspartate carbamoyltransferase catalytic subunit from Dichelobacter nodosus (strain VCS1703A).